The following is an 857-amino-acid chain: Facilitated trehalose transporter Tret1-1 (857 aa).

Disordered regions lie at residues 1 to 27 (MSGR…GKLK) and 92 to 203 (SFRP…KATS). Residues 1 to 392 (MSGRDNRGAG…VYRPTTNPIY (392 aa)) lie on the Cytoplasmic side of the membrane. A compositionally biased stretch (basic and acidic residues) spans 134-143 (EIREHRDRQQ). A compositionally biased stretch (polar residues) spans 171–181 (GNSNTNSNKAA). Phosphoserine occurs at positions 248, 249, 250, 320, and 322. Residues 327-346 (LTSRQHFQQQRSISTDSRKS) form a disordered region. The segment covering 330–341 (RQHFQQQRSIST) has biased composition (polar residues). The helical transmembrane segment at 393–413 (IWTQVLAALSVSLGSLVVGFV) threads the bilayer. Residues 414-440 (SAYTSPALVSMTDRNITSFEVTQDAGS) lie on the Extracellular side of the membrane. N-linked (GlcNAc...) asparagine glycosylation occurs at Asn428. A helical transmembrane segment spans residues 441–461 (WVGGIMPLAALAGGITGGPLI). At 462–473 (EYLGRRNTILAT) the chain is on the cytoplasmic side. A helical membrane pass occupies residues 474–494 (AVPFIVSSLLIACAVNVAMVL). Residues 495–497 (CGR) lie on the Extracellular side of the membrane. A helical transmembrane segment spans residues 498 to 518 (FLAGFCVGIASLSLPVYLGET). The Cytoplasmic portion of the chain corresponds to 519-528 (VQPEVRGTLG). Residues 529–549 (LLPTAFGNIGILLCFVAGSFM) traverse the membrane as a helical segment. Residue Asn550 is glycosylated (N-linked (GlcNAc...) asparagine). Over 550–552 (NWS) the chain is Extracellular. The helical transmembrane segment at 553–573 (MLAFLGAALPVPFLILMFLIP) threads the bilayer. The Cytoplasmic segment spans residues 574-636 (ETPRWFVGRG…ELLKLNNLKP (63 aa)). Residues 637–657 (LSISLGLMFFQQFSGINAVIF) form a helical membrane-spanning segment. Over 658 to 673 (YTVQIFKDAGSTIDGN) the chain is Extracellular. Residues 674-694 (LCTIIVGIVNFLATFIGIVLI) form a helical membrane-spanning segment. Over 695–700 (DRAGRK) the chain is Cytoplasmic. Residues 701-721 (ILLYVSDIAMVLTLFVLGGFF) traverse the membrane as a helical segment. Topologically, residues 722-740 (YCKANGPDVSHLGWLPLTC) are extracellular. Residues 741-761 (FVIYILGFSLGFGPIPWLMMG) traverse the membrane as a helical segment. The Cytoplasmic segment spans residues 762-767 (EILPAK). A helical transmembrane segment spans residues 768–788 (IRGSAASVATAFNWFCTFVVT). Residues 789–801 (KTFQDLTVAMGAH) lie on the Extracellular side of the membrane. The chain crosses the membrane as a helical span at residues 802 to 822 (GAFWLFGAICFVGLFFVIIYV). Residues 823–857 (PETQGKTLEDIERKMMGRVRRMSSVANIKPLSFNM) are Cytoplasmic-facing. 2 positions are modified to phosphoserine: Ser845 and Ser846.

This sequence belongs to the major facilitator superfamily. Sugar transporter (TC 2.A.1.1) family. Trehalose transporter subfamily.

The protein localises to the cell membrane. Functionally, low-capacity facilitative transporter for trehalose. Does not transport maltose, sucrose or lactose. Mediates the bidirectional transfer of trehalose. Responsible for the transport of trehalose synthesized in the fat body and the incorporation of trehalose into other tissues that require a carbon source, thereby regulating trehalose levels in the hemolymph. The chain is Facilitated trehalose transporter Tret1-1 from Drosophila sechellia (Fruit fly).